Consider the following 133-residue polypeptide: ATP synthase epsilon chain, chloroplastic (133 aa).

The protein belongs to the ATPase epsilon chain family. As to quaternary structure, F-type ATPases have 2 components, CF(1) - the catalytic core - and CF(0) - the membrane proton channel. CF(1) has five subunits: alpha(3), beta(3), gamma(1), delta(1), epsilon(1). CF(0) has three main subunits: a, b and c.

The protein localises to the plastid. It is found in the chloroplast thylakoid membrane. Its function is as follows. Produces ATP from ADP in the presence of a proton gradient across the membrane. The sequence is that of ATP synthase epsilon chain, chloroplastic from Nicotiana tomentosiformis (Tobacco).